A 402-amino-acid polypeptide reads, in one-letter code: S-adenosylmethionine synthase (402 aa).

An ATP-binding site is contributed by His-16. Asp-18 is a Mg(2+) binding site. Glu-44 provides a ligand contact to K(+). Glu-57 and Gln-109 together coordinate L-methionine. Residues 109–119 are flexible loop; that stretch reads QSAHIAQGVDA. ATP is bound by residues 174-176, Asp-252, 258-259, Ala-275, and Lys-279; these read DTK and RK. Residue Asp-252 coordinates L-methionine. Lys-283 contributes to the L-methionine binding site.

This sequence belongs to the AdoMet synthase family. Homotetramer; dimer of dimers. Mg(2+) is required as a cofactor. It depends on K(+) as a cofactor.

It is found in the cytoplasm. It catalyses the reaction L-methionine + ATP + H2O = S-adenosyl-L-methionine + phosphate + diphosphate. It participates in amino-acid biosynthesis; S-adenosyl-L-methionine biosynthesis; S-adenosyl-L-methionine from L-methionine: step 1/1. Functionally, catalyzes the formation of S-adenosylmethionine (AdoMet) from methionine and ATP. The overall synthetic reaction is composed of two sequential steps, AdoMet formation and the subsequent tripolyphosphate hydrolysis which occurs prior to release of AdoMet from the enzyme. This Rhizorhabdus wittichii (strain DSM 6014 / CCUG 31198 / JCM 15750 / NBRC 105917 / EY 4224 / RW1) (Sphingomonas wittichii) protein is S-adenosylmethionine synthase.